The following is a 551-amino-acid chain: MFSGLTNQFTSLVGAVKGGAGDEDVPAPTGDAPAAAPAASTSVEATASSAVDPEAAAAAGGEGLEGEEAGKRLPKSASLVDSLVSEATGWLGSAKGWLGNASIPSMPAMPSMPSMPAMPAMPSIPSIPGLRKGAGADGAEGAEGAVAGEGGAAASGAVSGGEDDDKSRYISATEGADSHPASGGGTPTGDEGQIGQGKGDEVKITTKVTQQAKHFGSFLSSAISKAGSKIKETVKDNTILDSFNKEQEAFIKGQGGVGNGAAPWIGHANEAKIKEEILGLSQDRRNFVRAPPAGVDFEFSYDTAYPTAIAIMAEDKALETMRFELVPKIITEENFWRNYFYRVSLIIQAAELGTLGADGVGQASSGEDANEVATKEKKSKTAEPAKGDSSVKAIAEQPKAVIEPEAQECDVQAAKSKAKAKAQAGKELGQKISESEFVSDDFQASSESDLAEIQDGMRKLGIDSMTQQALAATDEEQWEKDLEAELKDYEVVDEGGTGGDGGGGRRKGRKAGEDDTEADEDEPTISNLRTRSTNNDWEEYADLIEDTDDLK.

Disordered regions lie at residues 20-72 (AGDE…AGKR) and 117-198 (AMPA…GQGK). 3 stretches are compositionally biased toward low complexity: residues 26 to 59 (PAPTGDAPAAAPAASTSVEATASSAVDPEAAAAA), 117 to 128 (AMPAMPSIPSIP), and 137 to 146 (DGAEGAEGAV). Phosphoserine occurs at positions 178 and 182. Gly residues predominate over residues 182-197 (SGGGTPTGDEGQIGQG). Position 186 is a phosphothreonine (Thr-186). Residues 295 to 347 (VDFEFSYDTAYPTAIAIMAEDKALETMRFELVPKIITEENFWRNYFYRVSLII) enclose the BSD domain. Positions 360–391 (VGQASSGEDANEVATKEKKSKTAEPAKGDSSV) are disordered. The segment covering 373–386 (ATKEKKSKTAEPAK) has biased composition (basic and acidic residues). Ser-433 is modified (phosphoserine). The segment at 487-551 (KDYEVVDEGG…DLIEDTDDLK (65 aa)) is disordered. Over residues 514-523 (DDTEADEDEP) the composition is skewed to acidic residues. Residues 524 to 535 (TISNLRTRSTNN) are compositionally biased toward polar residues. Thr-530 is modified (phosphothreonine). Acidic residues predominate over residues 536-551 (DWEEYADLIEDTDDLK).

In terms of tissue distribution, expressed specifically in neurons and transported to synaptic terminals.

The protein is Synapse-associated protein of 47 kDa (Sap47) of Drosophila melanogaster (Fruit fly).